We begin with the raw amino-acid sequence, 800 residues long: Receptor-like protein 47 (800 aa).

An N-terminal signal peptide occupies residues Met1 to Ala31. The Extracellular portion of the chain corresponds to Lys32–Gln759. N-linked (GlcNAc...) asparagine glycosylation is found at Asn66 and Asn102. LRR repeat units follow at residues Gln109 to Asn131, Lys133 to Leu156, Ser157 to Asn179, Leu190 to Ser213, Leu214 to Ile238, Ser240 to Ser262, Pro263 to Pro288, Tyr294 to Pro311, Ser312 to Gln334, Thr335 to Leu358, Glu360 to Gly383, Arg385 to Val406, Val407 to Leu430, Asp431 to Asn453, His455 to His477, Leu479 to Cys500, Asp502 to Leu523, Leu524 to Phe550, Ser551 to Gly574, Phe621 to Leu645, Lys646 to Leu669, Ser670 to Leu693, and Phe695 to Thr718. The N-linked (GlcNAc...) asparagine glycan is linked to Asn155. The N-linked (GlcNAc...) asparagine glycan is linked to Asn210. An N-linked (GlcNAc...) asparagine glycan is attached at Asn259. Asn323 and Asn333 each carry an N-linked (GlcNAc...) asparagine glycan. An N-linked (GlcNAc...) asparagine glycan is attached at Asn365. N-linked (GlcNAc...) asparagine glycans are attached at residues Asn442, Asn465, Asn499, and Asn514. Asn668 is a glycosylation site (N-linked (GlcNAc...) asparagine). A glycan (N-linked (GlcNAc...) asparagine) is linked at Asn700. Residues Val760 to Ile780 traverse the membrane as a helical segment. At Gly781–Thr800 the chain is on the cytoplasmic side.

Belongs to the RLP family.

The protein resides in the cell membrane. This chain is Receptor-like protein 47, found in Arabidopsis thaliana (Mouse-ear cress).